Here is a 188-residue protein sequence, read N- to C-terminus: Apolipoprotein M (188 aa).

The segment at residues 1–22 (MFHQIWAALLYLYGILLNSIYQ) is a signal peptide (not cleaved). Intrachain disulfides connect Cys23/Cys167, Cys95/Cys183, and Cys128/Cys157. Residues Glu136 and Arg143 each contribute to the tetradecanoate site.

It belongs to the calycin superfamily. Lipocalin family. Highly divergent. Interacts with LRP2; LRP2 mediates APOM renal uptake and subsequent lysosomal degradation.

The protein resides in the secreted. Its function is as follows. Probably involved in lipid transport. Can bind sphingosine-1-phosphate, myristic acid, palmitic acid and stearic acid, retinol, all-trans-retinoic acid and 9-cis-retinoic acid. This chain is Apolipoprotein M (APOM), found in Sus scrofa (Pig).